The primary structure comprises 338 residues: D-erythrose-4-phosphate dehydrogenase (338 aa).

11 to 12 (RI) contributes to the NAD(+) binding site. Substrate-binding positions include 153–155 (SCT), R199, 212–213 (TK), and R235. The active-site Nucleophile is C154. N317 contributes to the NAD(+) binding site.

Belongs to the glyceraldehyde-3-phosphate dehydrogenase family. Epd subfamily. As to quaternary structure, homotetramer.

The protein localises to the cytoplasm. It carries out the reaction D-erythrose 4-phosphate + NAD(+) + H2O = 4-phospho-D-erythronate + NADH + 2 H(+). It functions in the pathway cofactor biosynthesis; pyridoxine 5'-phosphate biosynthesis; pyridoxine 5'-phosphate from D-erythrose 4-phosphate: step 1/5. Functionally, catalyzes the NAD-dependent conversion of D-erythrose 4-phosphate to 4-phosphoerythronate. The chain is D-erythrose-4-phosphate dehydrogenase from Shewanella sp. (strain MR-4).